A 317-amino-acid polypeptide reads, in one-letter code: Ribosomal protein L11 methyltransferase (317 aa).

The S-adenosyl-L-methionine site is built by T169, G190, D211, and N256.

Belongs to the methyltransferase superfamily. PrmA family.

The protein localises to the cytoplasm. It catalyses the reaction L-lysyl-[protein] + 3 S-adenosyl-L-methionine = N(6),N(6),N(6)-trimethyl-L-lysyl-[protein] + 3 S-adenosyl-L-homocysteine + 3 H(+). In terms of biological role, methylates ribosomal protein L11. This chain is Ribosomal protein L11 methyltransferase, found in Helicobacter hepaticus (strain ATCC 51449 / 3B1).